The following is a 356-amino-acid chain: Competence protein ComGA (356 aa).

144 to 151 (GPTGSGKT) contacts ATP.

This sequence belongs to the GSP E family.

It localises to the cell membrane. Functionally, required for uptake of DNA by competent cells. This chain is Competence protein ComGA (comGA), found in Bacillus subtilis (strain 168).